The following is a 475-amino-acid chain: E3 ubiquitin-protein ligase TRIM21 (475 aa).

The RING-type zinc-finger motif lies at 16-55; the sequence is CPICLDPFVEPVSIECGHSFCQECISQVGKGGGSVCPVCR. Zn(2+) contacts are provided by cysteine 92, histidine 95, cysteine 114, and histidine 120. Residues 92–123 form a B box-type zinc finger; that stretch reads CAVHGERLHLFCEKDGKALCWVCAQSRKHRDH. Positions 128–238 form a coiled coil; sequence LEEAAQEYQE…ISELDRRCHS (111 aa). Position 266 is a phosphoserine (serine 266). The B30.2/SPRY domain maps to 268–465; that stretch reads ELRSVCHVPG…NTAPLTLCPL (198 aa).

It belongs to the TRIM/RBCC family. Homotrimer. Interacts (via C-terminus) with IRF8 (via C-terminus). Component of a SCF(SKP2)-like complex containing CUL1, SKP1, TRIM21 and SKP2. Interacts with CALR, CUL1, FBXW11, HSPA5, IKBKB, IRF3, SKP1 and VCP. Interacts with SKP2; the interaction with SKP2 does not depend on an intact F-box domain. Interacts (via N-terminus and C-terminus) with DCP2 (via N-terminus and C-terminus). Interacts with ULK1, BECN1 and with ATG8 family members, including GABARAP, GABARAPL1, GABARAPL2 and MAP1LC3C/LC3C. Interacts with TRIM21 and SQSTM1/sequestosome 1. Interacts with IRF3. Interacts (via the SPRY domain) with NMI (via coiled-coil domain); the interaction promotes 'Lys-63'-linked ubiquitination of NMI. Interacts with IFI35 and NMI; the interaction facilitates NMI-IFI35 complex formation. In terms of assembly, (Microbial infection) Interacts (via B30.2/SPRY domain) with severe fever with thrombocytopenia syndrome virus (SFTSV) NSs; this interaction activates NFE2L2-mediated transcriptional activation of antioxidant genes. In terms of processing, autoubiquitinated; does not lead to its proteasomal degradation. Deubiquitinated by USP4; leading to its stabilization. As to expression, isoform 1 and isoform 2 are expressed in fetal and adult heart and fetal lung.

Its subcellular location is the cytoplasm. It localises to the cytoplasmic vesicle. It is found in the autophagosome. The protein resides in the nucleus. The protein localises to the P-body. Its subcellular location is the stress granule. The catalysed reaction is S-ubiquitinyl-[E2 ubiquitin-conjugating enzyme]-L-cysteine + [acceptor protein]-L-lysine = [E2 ubiquitin-conjugating enzyme]-L-cysteine + N(6)-ubiquitinyl-[acceptor protein]-L-lysine.. The protein operates within protein modification; protein ubiquitination. E3 ubiquitin-protein ligase whose activity is dependent on E2 enzymes, UBE2D1, UBE2D2, UBE2E1 and UBE2E2. Forms a ubiquitin ligase complex in cooperation with the E2 UBE2D2 that is used not only for the ubiquitination of USP4 and IKBKB but also for its self-ubiquitination. Component of cullin-RING-based SCF (SKP1-CUL1-F-box protein) E3 ubiquitin-protein ligase complexes such as SCF(SKP2)-like complexes. A TRIM21-containing SCF(SKP2)-like complex is shown to mediate ubiquitination of CDKN1B ('Thr-187' phosphorylated-form), thereby promoting its degradation by the proteasome. Monoubiquitinates IKBKB that will negatively regulates Tax-induced NF-kappa-B signaling. Negatively regulates IFN-beta production post-pathogen recognition by catalyzing polyubiquitin-mediated degradation of IRF3. Mediates the ubiquitin-mediated proteasomal degradation of IgG1 heavy chain, which is linked to the VCP-mediated ER-associated degradation (ERAD) pathway. Promotes IRF8 ubiquitination, which enhanced the ability of IRF8 to stimulate cytokine genes transcription in macrophages. Plays a role in the regulation of the cell cycle progression. Enhances the decapping activity of DCP2. Exists as a ribonucleoprotein particle present in all mammalian cells studied and composed of a single polypeptide and one of four small RNA molecules. At least two isoforms are present in nucleated and red blood cells, and tissue specific differences in RO/SSA proteins have been identified. The common feature of these proteins is their ability to bind HY RNAs.2. Involved in the regulation of innate immunity and the inflammatory response in response to IFNG/IFN-gamma. Organizes autophagic machinery by serving as a platform for the assembly of ULK1, Beclin 1/BECN1 and ATG8 family members and recognizes specific autophagy targets, thus coordinating target recognition with assembly of the autophagic apparatus and initiation of autophagy. Also regulates autophagy through FIP200/RB1CC1 ubiquitination and subsequent decreased protein stability. Represses the innate antiviral response by facilitating the formation of the NMI-IFI35 complex through 'Lys-63'-linked ubiquitination of NMI. During viral infection, promotes cell pyroptosis by mediating 'Lys-6'-linked ubiquitination of ISG12a/IFI27, facilitating its translocation into the mitochondria and subsequent CASP3 activation. When up-regulated through the IFN/JAK/STAT signaling pathway, promotes 'Lys-27'-linked ubiquitination of MAVS, leading to the recruitment of TBK1 and up-regulation of innate immunity. Mediates 'Lys-63'-linked polyubiquitination of G3BP1 in response to heat shock, leading to stress granule disassembly. This Homo sapiens (Human) protein is E3 ubiquitin-protein ligase TRIM21.